A 469-amino-acid polypeptide reads, in one-letter code: GTPase Der (469 aa).

2 consecutive EngA-type G domains span residues 30–193 (PVLA…PEVA) and 203–376 (RRVA…ASWD). Residues 36-43 (GRPNVGKS), 83-87 (DTGGW), 145-148 (NKVD), 209-216 (GKPNVGKS), 256-260 (DTAGL), and 321-324 (NKWD) contribute to the GTP site. In terms of domain architecture, KH-like spans 377 to 459 (TRIPTGPLNS…PIRINVRVRE (83 aa)).

Belongs to the TRAFAC class TrmE-Era-EngA-EngB-Septin-like GTPase superfamily. EngA (Der) GTPase family. In terms of assembly, associates with the 50S ribosomal subunit.

In terms of biological role, GTPase that plays an essential role in the late steps of ribosome biogenesis. This is GTPase Der from Mycobacterium ulcerans (strain Agy99).